Here is a 325-residue protein sequence, read N- to C-terminus: Glyoxylate/hydroxypyruvate reductase B (325 aa).

Catalysis depends on residues Arg-237 and Glu-266. Catalysis depends on His-285, which acts as the Proton donor.

Belongs to the D-isomer specific 2-hydroxyacid dehydrogenase family. GhrB subfamily. Homodimer.

The protein resides in the cytoplasm. It catalyses the reaction glycolate + NADP(+) = glyoxylate + NADPH + H(+). The enzyme catalyses (R)-glycerate + NAD(+) = 3-hydroxypyruvate + NADH + H(+). It carries out the reaction (R)-glycerate + NADP(+) = 3-hydroxypyruvate + NADPH + H(+). Its function is as follows. Catalyzes the NADPH-dependent reduction of glyoxylate and hydroxypyruvate into glycolate and glycerate, respectively. This Serratia proteamaculans (strain 568) protein is Glyoxylate/hydroxypyruvate reductase B.